Reading from the N-terminus, the 100-residue chain is Enhancer of yellow 2 transcription factor (100 aa).

This sequence belongs to the ENY2 family. As to quaternary structure, component of the nuclear pore complex (NPC)-associated AMEX complex (anchoring and mRNA export complex), composed of at least e(y)2 and xmas-2. Component of the SAGA transcription coactivator-HAT complexes, at least composed of Ada2b, e(y)2, Pcaf/Gcn5, Taf10 and Nipped-A/Trrap. Within the SAGA complex, e(y)2, Sgf11, and not/nonstop form an additional subcomplex of SAGA called the DUB module (deubiquitination module). Component of the THO complex, composed of at least e(y)2, HPR1, THO2, THOC5, THOC6 and THOC7. Interacts with e(y)1. Interacts with su(Hw) (via zinc fingers). Interacts with xmas-2; required for localization to the nuclear periphery. Interacts with the nuclear pore complex (NPC).

It is found in the nucleus. It localises to the nucleoplasm. The protein resides in the cytoplasm. Functionally, involved in mRNA export coupled transcription activation by association with both the AMEX and the SAGA complexes. The SAGA complex is a multiprotein complex that activates transcription by remodeling chromatin and mediating histone acetylation and deubiquitination. Within the SAGA complex, participates in a subcomplex that specifically deubiquitinates histone H2B. The SAGA complex is recruited to specific gene promoters by activators, where it is required for transcription. Required for nuclear receptor-mediated transactivation. Involved in transcription elongation by recruiting the THO complex onto nascent mRNA. The AMEX complex functions in docking export-competent ribonucleoprotein particles (mRNPs) to the nuclear entrance of the nuclear pore complex (nuclear basket). AMEX participates in mRNA export and accurate chromatin positioning in the nucleus by tethering genes to the nuclear periphery. This chain is Enhancer of yellow 2 transcription factor, found in Drosophila pseudoobscura pseudoobscura (Fruit fly).